An 878-amino-acid chain; its full sequence is MAKSAQGRTKEPTPMMRQYLEVKERYPGYLLLFRVGDFYETFLDDAVTVSSALNIVLTRRSNGGAGEIPLAGFPHHASEGYIAKLVTKGFKVAVCDQVEDPALAKGIVKREITDIVTPGITYSDKILDDRHNNYLCAVAPVKRGREHMAGVAFVDVTTAEFRMTELPLGELKDFLQSLRPSEILISSRDKELRESLAKSLFSGALFTTLDEWMFTEEQAARVLENHFKTHSLKGFGIEGYEAGRIAAGVILQYLEEAKQGSLKYLVRIGLVESGETMTLDIQTCRNLEIISSMQDGSLNGSLLEVIDRTKNPMGARLLRRWLLHPLRKLEPVVRRHDAVGELLDAPEMREGIRGMLGGIIDLERALARIATSRAMPREVRQLGSSLAMIPQLKSLLEGSKSLRLRELALRLDPLPELAETIEKALDAEASGTLRDGGYIRAGYHAELDELRAISSGARDRLLEIQQQERQRTSISTLKVQYNKVFGYYIEVSRANSDKVPEYYEKKQTLVNAERYTIPALKEYEEKILTAEEKSQLLEHQLFQELCAMIAEQAASIQTTAAALAELDCLACFASCADEFGYCRPVMNEGTELSIRAGRHPVLERILGADEPYVANDCQVGSEQQLLIITGPNMAGKSSYLRQVGLVVLLAQVGCFVPAESAEIGLVDRIFTRVGASDNLTSGESTFLVEMNEAASILNNATERSLLLLDEIGRGTSTFDGMSIAWSMCEYIHDQLRSRTLFATHYHELAELESRFERIVNFNATVVETADTVIFLRKIVRGASDNSYGIEVAKMAGMPPEVIERAREILAGMERREVEVPVQRQALPLRVESRQISLFEEEESRLRKALSGIDINRLTPLDALMELKRLQEIALGKGA.

ATP is bound at residue 630–637 (GPNMAGKS).

This sequence belongs to the DNA mismatch repair MutS family.

Its function is as follows. This protein is involved in the repair of mismatches in DNA. It is possible that it carries out the mismatch recognition step. This protein has a weak ATPase activity. This Chlorobaculum tepidum (strain ATCC 49652 / DSM 12025 / NBRC 103806 / TLS) (Chlorobium tepidum) protein is DNA mismatch repair protein MutS.